The primary structure comprises 428 residues: L-rhamnose isomerase (428 aa).

Residues histidine 260, aspartate 292, and aspartate 294 each contribute to the Mn(2+) site.

This sequence belongs to the rhamnose isomerase family. Mn(2+) serves as cofactor.

It localises to the cytoplasm. It carries out the reaction L-rhamnopyranose = L-rhamnulose. It functions in the pathway carbohydrate degradation; L-rhamnose degradation; glycerone phosphate from L-rhamnose: step 1/3. Catalyzes the interconversion of L-rhamnose and L-rhamnulose. The protein is L-rhamnose isomerase of Enterococcus faecalis (strain ATCC 700802 / V583).